The following is a 459-amino-acid chain: Cysteine--tRNA ligase (459 aa).

Cysteine 28 contacts Zn(2+). Residues 30–40 (VTVYDLCHFGH) carry the 'HIGH' region motif. Residues cysteine 209, histidine 234, and glutamate 238 each contribute to the Zn(2+) site. A 'KMSKS' region motif is present at residues 266-270 (KMSKS). An ATP-binding site is contributed by lysine 269.

Belongs to the class-I aminoacyl-tRNA synthetase family. Monomer. The cofactor is Zn(2+).

It localises to the cytoplasm. It catalyses the reaction tRNA(Cys) + L-cysteine + ATP = L-cysteinyl-tRNA(Cys) + AMP + diphosphate. The sequence is that of Cysteine--tRNA ligase from Glaesserella parasuis serovar 5 (strain SH0165) (Haemophilus parasuis).